A 227-amino-acid chain; its full sequence is Ribonuclease 3 (227 aa).

Positions Leu-4–Gly-126 constitute an RNase III domain. Glu-39 contacts Mg(2+). The active site involves Asp-43. Positions 112 and 115 each coordinate Mg(2+). Glu-115 is an active-site residue. Residues Asp-153–Ile-226 form the DRBM domain.

The protein belongs to the ribonuclease III family. Homodimer. Requires Mg(2+) as cofactor.

The protein localises to the cytoplasm. It catalyses the reaction Endonucleolytic cleavage to 5'-phosphomonoester.. Digests double-stranded RNA. Involved in the processing of primary rRNA transcript to yield the immediate precursors to the large and small rRNAs (23S and 16S). Processes some mRNAs, and tRNAs when they are encoded in the rRNA operon. Processes pre-crRNA and tracrRNA of type II CRISPR loci if present in the organism. The polypeptide is Ribonuclease 3 (Haemophilus influenzae (strain 86-028NP)).